The chain runs to 64 residues: Large ribosomal subunit protein bL33 (64 aa).

It belongs to the bacterial ribosomal protein bL33 family.

This Picosynechococcus sp. (strain ATCC 27264 / PCC 7002 / PR-6) (Agmenellum quadruplicatum) protein is Large ribosomal subunit protein bL33.